Consider the following 314-residue polypeptide: Probable cell division protein WhiA (314 aa).

A DNA-binding region (H-T-H motif) is located at residues 282-314 (SLKELGELCRPPVSKSGAAHRMRQLMALAESLE).

This sequence belongs to the WhiA family.

In terms of biological role, involved in cell division and chromosome segregation. This Symbiobacterium thermophilum (strain DSM 24528 / JCM 14929 / IAM 14863 / T) protein is Probable cell division protein WhiA.